The sequence spans 348 residues: GTPase Obg (348 aa).

The Obg domain occupies 1–159; sequence MKFVDEVKVH…RELVLELKLM (159 aa). An OBG-type G domain is found at 160 to 331; the sequence is ADVGLVGLPN…LLSALVRILS (172 aa). Residues 166-173, 191-195, 213-216, 283-286, and 312-314 contribute to the GTP site; these read GLPNAGKS, FTTLI, DIPG, NKVD, and SAR. Residues Ser173 and Thr193 each coordinate Mg(2+).

The protein belongs to the TRAFAC class OBG-HflX-like GTPase superfamily. OBG GTPase family. Monomer. Mg(2+) serves as cofactor.

The protein resides in the cytoplasm. Its function is as follows. An essential GTPase which binds GTP, GDP and possibly (p)ppGpp with moderate affinity, with high nucleotide exchange rates and a fairly low GTP hydrolysis rate. Plays a role in control of the cell cycle, stress response, ribosome biogenesis and in those bacteria that undergo differentiation, in morphogenesis control. This Syntrophobacter fumaroxidans (strain DSM 10017 / MPOB) protein is GTPase Obg.